Consider the following 741-residue polypeptide: Zinc finger protein 425 (741 aa).

The KRAB domain maps to D1–R69. Disordered regions lie at residues T67 to K86 and R128 to R169. The span at F132 to A151 shows a compositional bias: polar residues. A compositionally biased stretch (basic and acidic residues) spans D153–G168. 19 consecutive C2H2-type zinc fingers follow at residues Y179–H201, F235–H257, Y263–H285, F291–H313, F319–H341, F347–H369, F375–H397, F403–H425, F431–H453, F459–H481, F487–H509, F515–H537, F543–H565, F571–H593, Y599–H621, F627–H649, F655–H677, F683–H705, and F711–H733.

It belongs to the krueppel C2H2-type zinc-finger protein family.

The protein localises to the nucleus. It is found in the cytoplasm. Functionally, acts as a transcriptional repressor. This is Zinc finger protein 425 (ZNF425) from Macaca fascicularis (Crab-eating macaque).